The following is a 240-amino-acid chain: DNA repair protein RecO (240 aa).

The protein belongs to the RecO family.

Its function is as follows. Involved in DNA repair and RecF pathway recombination. The polypeptide is DNA repair protein RecO (Actinobacillus pleuropneumoniae serotype 5b (strain L20)).